The chain runs to 162 residues: Ciliary microtubule inner protein 5 (162 aa).

The tract at residues 1–44 is disordered; that stretch reads MGSHPTPGLQRTTSAGYRLPPTRPPASVSPAARGGPMASRGLAG.

The protein localises to the cell projection. It localises to the cilium. The polypeptide is Ciliary microtubule inner protein 5 (Homo sapiens (Human)).